A 411-amino-acid chain; its full sequence is Peptidase T (411 aa).

His-78 lines the Zn(2+) pocket. The active site involves Asp-80. Asp-140 contacts Zn(2+). Glu-173 functions as the Proton acceptor in the catalytic mechanism. Zn(2+)-binding residues include Glu-174, Asp-196, and His-379.

It belongs to the peptidase M20B family. Requires Zn(2+) as cofactor.

It localises to the cytoplasm. The catalysed reaction is Release of the N-terminal residue from a tripeptide.. Functionally, cleaves the N-terminal amino acid of tripeptides. The polypeptide is Peptidase T (Yersinia pseudotuberculosis serotype O:3 (strain YPIII)).